Here is a 384-residue protein sequence, read N- to C-terminus: Oxoeicosanoid receptor 1 (384 aa).

The disordered stretch occupies residues Met-1–Ser-21. The Extracellular segment spans residues Met-1–Pro-58. N-linked (GlcNAc...) asparagine glycosylation is present at Asn-5. Over residues Ser-7–Ser-21 the composition is skewed to low complexity. A helical transmembrane segment spans residues Ile-59–Cys-79. Residues Ile-80–Ser-87 lie on the Cytoplasmic side of the membrane. The helical transmembrane segment at Asn-88–Leu-108 threads the bilayer. Residues Arg-109–Asn-129 lie on the Extracellular side of the membrane. The cysteines at positions 126 and 198 are disulfide-linked. Residues Leu-130–Tyr-152 form a helical membrane-spanning segment. Over Leu-153–Arg-172 the chain is Cytoplasmic. Residues Val-173–Phe-193 form a helical membrane-spanning segment. Residues Ser-194–Gln-215 are Extracellular-facing. A helical membrane pass occupies residues Ala-216–Ile-236. Over Gly-237–Arg-256 the chain is Cytoplasmic. A helical membrane pass occupies residues Val-257–Met-277. Residues Ala-278 to Leu-297 lie on the Extracellular side of the membrane. Residues Phe-298–Phe-318 form a helical membrane-spanning segment. Topologically, residues Ser-319 to Gly-384 are cytoplasmic.

The protein belongs to the G-protein coupled receptor 1 family. As to expression, expressed in various tissues except brain. Expression is more intense in liver, kidney, peripheral leukocyte, lung, and spleen than in other tissues. Highly expressed in eosinophils, neutrophils, and lung macrophages.

The protein resides in the membrane. Receptor for eicosanoids and polyunsaturated fatty acids such as 5-oxo-6E,8Z,11Z,14Z-eicosatetraenoic acid (5-OXO-ETE), 5(S)-hydroperoxy-6E,8Z,11Z,14Z-eicosatetraenoic acid (5(S)-HPETE) and arachidonic acid. Seems to be coupled to the G(i)/G(o), families of heteromeric G proteins. In Homo sapiens (Human), this protein is Oxoeicosanoid receptor 1 (OXER1).